The chain runs to 203 residues: Proline-rich protein 1 (203 aa).

Residues 1–20 (MMKLGLYLTLLFLSVWTVSG) form the signal peptide.

In terms of tissue distribution, component of the acid-insoluble and acid-soluble organic matrix of calcified layers of the shell (at protein level).

It localises to the secreted. The polypeptide is Proline-rich protein 1 (Lottia gigantea (Giant owl limpet)).